Reading from the N-terminus, the 139-residue chain is Nucleoside diphosphate kinase (139 aa).

ATP contacts are provided by K10, F58, R86, T92, R104, and N114. Residue H117 is the Pros-phosphohistidine intermediate of the active site.

This sequence belongs to the NDK family. In terms of assembly, homotetramer. Mg(2+) serves as cofactor.

The protein localises to the cytoplasm. The enzyme catalyses a 2'-deoxyribonucleoside 5'-diphosphate + ATP = a 2'-deoxyribonucleoside 5'-triphosphate + ADP. It catalyses the reaction a ribonucleoside 5'-diphosphate + ATP = a ribonucleoside 5'-triphosphate + ADP. Major role in the synthesis of nucleoside triphosphates other than ATP. The ATP gamma phosphate is transferred to the NDP beta phosphate via a ping-pong mechanism, using a phosphorylated active-site intermediate. This chain is Nucleoside diphosphate kinase, found in Rhodococcus opacus (strain B4).